Consider the following 311-residue polypeptide: 4-hydroxy-tetrahydrodipicolinate synthase (311 aa).

Thr-51 provides a ligand contact to pyruvate. The active-site Proton donor/acceptor is Tyr-140. Lys-168 functions as the Schiff-base intermediate with substrate in the catalytic mechanism. Ile-209 is a binding site for pyruvate.

The protein belongs to the DapA family. In terms of assembly, homotetramer; dimer of dimers.

The protein resides in the cytoplasm. It catalyses the reaction L-aspartate 4-semialdehyde + pyruvate = (2S,4S)-4-hydroxy-2,3,4,5-tetrahydrodipicolinate + H2O + H(+). It functions in the pathway amino-acid biosynthesis; L-lysine biosynthesis via DAP pathway; (S)-tetrahydrodipicolinate from L-aspartate: step 3/4. Functionally, catalyzes the condensation of (S)-aspartate-beta-semialdehyde [(S)-ASA] and pyruvate to 4-hydroxy-tetrahydrodipicolinate (HTPA). The sequence is that of 4-hydroxy-tetrahydrodipicolinate synthase from Streptococcus suis (strain 98HAH33).